A 245-amino-acid chain; its full sequence is Polyhedrin (245 aa).

This sequence belongs to the polyhedrin family.

Functionally, major component of the virus occlusion bodies, which are large proteinaceous structures (polyhedra), that protect the virus from the outside environment for extended periods until they are ingested by insect larvae. The sequence is that of Polyhedrin from Lepidoptera (butterflies and moths).